We begin with the raw amino-acid sequence, 460 residues long: MHRYQKEIVRLIKLSTPVLIASVAQTGMGFVDTVMAGGVSATDMAAVAIAASVWLPSVLFGVGLLMALVPVVAQLNGSGKSKKVPFEIHQGVYLALLTSIPIMLVLYNAGFIIAAMDVEPELYEKTQGYLHAVLWAAPAFLLFQTLRSFCEGLSLTTPAMIIGFIGLAANVPLNWMFVYGELGAPALGGVGCGVATAIVYWLMFLTMTLYTFIAPKLRRVNLYENWNKPQRKEIYRLFKLGLPVALSIFFEVTLFAAVALLVSPLGSTVVAAHQVAINFSSLIFMIPMSIAVAVSIRVGHKLGEKDLDGAKVASYCGLAFGLLMACCTAILTLIFREQIAYLYSDNQEVITLAVSLMLLAAIYQCTDAVQVVAAGALRGYKDMNAIFKCTFVSYWIVGLPSGYVLGMTDWIREPMGVYGFWFGFIGGLTTSAILLTCRLLWLQRNPTRIDMEVDELQIMH.

A run of 12 helical transmembrane segments spans residues 18–38 (VLIA…MAGG), 53–73 (VWLP…PVVA), 94–114 (LALL…FIIA), 126–146 (TQGY…FQTL), 159–179 (AMII…MFVY), 185–205 (PALG…LMFL), 242–262 (LPVA…ALLV), 276–296 (AINF…AVSI), 315–335 (YCGL…TLIF), 349–369 (VITL…TDAV), 391–411 (FVSY…TDWI), and 415–435 (MGVY…AILL).

This sequence belongs to the multi antimicrobial extrusion (MATE) (TC 2.A.66.1) family.

It is found in the cell inner membrane. Its function is as follows. Multidrug efflux pump that functions as a Na(+)/drug antiporter. This chain is Multidrug resistance protein NorM (norM), found in Aliivibrio fischeri (strain ATCC 700601 / ES114) (Vibrio fischeri).